A 146-amino-acid chain; its full sequence is Large ribosomal subunit protein uL15 (146 aa).

The segment at 1–39 (MTLKLHNLRPAPGAKTAKTRVGRGEGSKGKTAGRGTKGT) is disordered.

It belongs to the universal ribosomal protein uL15 family. Part of the 50S ribosomal subunit.

Its function is as follows. Binds to the 23S rRNA. This is Large ribosomal subunit protein uL15 from Nocardioides sp. (strain ATCC BAA-499 / JS614).